Here is a 286-residue protein sequence, read N- to C-terminus: B3 domain-containing protein REM20 (286 aa).

The TF-B3 DNA-binding region spans 9–102; it reads PRFFKVFLVE…TFEVSVFDRW (94 aa). The tract at residues 117–161 is disordered; sequence SDSDSDSVVEDEKDSTDVVEDDDDEDEDEDEDDDGSFDEDEEISQ. The segment covering 119 to 159 has biased composition (acidic residues); the sequence is SDSDSVVEDEKDSTDVVEDDDDEDEDEDEDDDGSFDEDEEI.

Its subcellular location is the nucleus. The protein is B3 domain-containing protein REM20 (REM20) of Arabidopsis thaliana (Mouse-ear cress).